The chain runs to 536 residues: Caspase A (536 aa).

Positions 1–273 (MVLKTIEDNC…DSQSRMPRTD (273 aa)) are cleaved as a propeptide — removed in mature form by autoprocessing. Residues His-364 and Cys-406 contribute to the active site.

It belongs to the peptidase C14A family. As to quaternary structure, heterodimer formed by the tight association of the large subunit p16 and the small subunit p14. Autocatalytic cleavage removes the propeptide and generates the two active subunits p16 and p14 in vitro. Cannot be cleaved by ced-3 in vitro. Isoform a: Expression is restricted to the late germline pachytene stage of meiosis I in both L4 larvae and adult hermaphrodite gonads. Isoform b: Expression is restricted to the late germline pachytene stage of meiosis I in both L4 larvae and adult hermaphrodite gonads.

It catalyses the reaction Strict requirement for an Asp residue at position P1 and has a preferred cleavage sequence of Tyr-Val-Ala-Asp-|-.. Inhibited by cysteine protease inhibitor iodoacetic acid (CH3COOI) but not by N-[N-(L-3-transcarboxirane-2-carbonyl)-leucyl]-agmatine (E-64) or benzyloxycarbonyl-DEVD-fluoro-methyl ketone (Z-DEVD-FMK). Cysteine protease which, in vitro, cleaves itself and caspase ced-3 into their mature active forms. Also cleaves, in vitro, inactive caspase csp-2 isoform b. Required maternally to induce apoptosis in a subset of cells fated to die during embryogenesis, mostly independently of the ced-9, ced-4 and ced-3 canonical apoptosis pathway. Involved in the degeneration of dopaminergic CEP neurons in response to high Mn(2+) levels. In terms of biological role, dispensable for regulating apoptosis during embryogenesis. The sequence is that of Caspase A from Caenorhabditis elegans.